We begin with the raw amino-acid sequence, 262 residues long: Tetratricopeptide repeat protein 33 (262 aa).

TPR repeat units follow at residues 59 to 92, 93 to 126, and 127 to 160; these read SKQLKDEGASLAENKRYREAIQKWDEALQLTPND, ATLYEMKSQVLMSLHEMFPAVHAAEMAVQQNPHS, and WESWQTLGRAQLGLGEIILAIRSFQVALHIYPMN. A Phosphoserine modification is found at S197. A Phosphothreonine modification is found at T251.

This chain is Tetratricopeptide repeat protein 33 (TTC33), found in Homo sapiens (Human).